Here is a 333-residue protein sequence, read N- to C-terminus: MIERIWSGRSRLYWLLLPLSWLYGFITFLIRQSYRLGWRKSWRAPVPVVVVGNLTAGGNGKTPVVIWLVEHLQRRGYRVGVVSRGYGGKAERYPLLLDDTVTTAQAGDEPVLIFQRTGAPVAVAPRRRDAVSALLAQHTLDVVITDDGLQHYALERDIELVVIDGMRRFGNGWWLPAGPMRERESRLTSVDAVIVNGGTPRTNEIGMTLTAGMAVNLLSGESRPLSQLHDVVAMAGIGHPPRFFATLREAGVSIAREIAFADHQSYQPEQLESLTQDATQPLLMTEKDAVKCKTFAQRNWWYLPVDAMLAEPRATQLLDKLESVIKRHTSNRT.

Residue 55 to 62 (TAGGNGKT) participates in ATP binding.

This sequence belongs to the LpxK family.

The enzyme catalyses a lipid A disaccharide + ATP = a lipid IVA + ADP + H(+). It participates in glycolipid biosynthesis; lipid IV(A) biosynthesis; lipid IV(A) from (3R)-3-hydroxytetradecanoyl-[acyl-carrier-protein] and UDP-N-acetyl-alpha-D-glucosamine: step 6/6. Its function is as follows. Transfers the gamma-phosphate of ATP to the 4'-position of a tetraacyldisaccharide 1-phosphate intermediate (termed DS-1-P) to form tetraacyldisaccharide 1,4'-bis-phosphate (lipid IVA). The chain is Tetraacyldisaccharide 4'-kinase from Pectobacterium carotovorum subsp. carotovorum (strain PC1).